The primary structure comprises 117 residues: Cell division protein FtsB (117 aa).

The Cytoplasmic portion of the chain corresponds to 1 to 6 (MRDWRW). A helical transmembrane segment spans residues 7–24 (MLLVLALLLGWLQYRFWF). The Periplasmic segment spans residues 25–117 (GPGNSGEVMM…QVGDHPADVP (93 aa)). A coiled-coil region spans residues 29–69 (SGEVMMLEAQVANQERDNEGLQQRNDALAAEVKDLKEGQSA).

Belongs to the FtsB family. In terms of assembly, part of a complex composed of FtsB, FtsL and FtsQ.

It localises to the cell inner membrane. Essential cell division protein. May link together the upstream cell division proteins, which are predominantly cytoplasmic, with the downstream cell division proteins, which are predominantly periplasmic. The protein is Cell division protein FtsB of Stenotrophomonas maltophilia (strain K279a).